Reading from the N-terminus, the 449-residue chain is Glucose-6-phosphate isomerase (449 aa).

At Thr38 the chain carries Phosphothreonine. Glu290 (proton donor) is an active-site residue. Residues His311 and Lys425 contribute to the active site.

This sequence belongs to the GPI family.

The protein resides in the cytoplasm. It catalyses the reaction alpha-D-glucose 6-phosphate = beta-D-fructose 6-phosphate. It participates in carbohydrate biosynthesis; gluconeogenesis. It functions in the pathway carbohydrate degradation; glycolysis; D-glyceraldehyde 3-phosphate and glycerone phosphate from D-glucose: step 2/4. Catalyzes the reversible isomerization of glucose-6-phosphate to fructose-6-phosphate. This is Glucose-6-phosphate isomerase from Geobacillus thermodenitrificans (strain NG80-2).